The primary structure comprises 729 residues: Leucine-rich repeat flightless-interacting protein 2 (729 aa).

Positions 27–69 (IAREAEARLAAKRAARAEARDIRMRELERQQKELTHRYHDKKW) form a coiled coil. Disordered stretches follow at residues 80–156 (DHAR…SSSH), 230–268 (SARSSPVCSDDEGSVSYSSCRGRRDSVSSDFSDQSESAA), and 289–344 (IPDL…CSLD). A compositionally biased stretch (basic residues) spans 84–93 (HLQRSSHRHS). Over residues 99-110 (VTPNHRSSSVDV) the composition is skewed to polar residues. Over residues 115-126 (RGRESISRRRDS) the composition is skewed to basic and acidic residues. 2 stretches are compositionally biased toward low complexity: residues 137–147 (RTSNSYSNSYD) and 257–268 (SSDFSDQSESAA). A compositionally biased stretch (polar residues) spans 304–320 (TTENYSRPSSRNATSGI). Coiled coils occupy residues 357-531 (DLKD…IGEK) and 574-722 (LDVR…KANR). Residues 600 to 621 (DDERQKSAKNNSTTTDPTGLEN) are disordered. A compositionally biased stretch (polar residues) spans 607-616 (AKNNSTTTDP).

It belongs to the LRRFIP family.

Functionally, may function as activator of the canonical Wnt signaling pathway upstream of ctnnb1/beta-catenin. Might be required for dorsal axis formation. This chain is Leucine-rich repeat flightless-interacting protein 2 (lrrfip2), found in Xenopus laevis (African clawed frog).